Here is a 282-residue protein sequence, read N- to C-terminus: ATP synthase gamma chain (282 aa).

This sequence belongs to the ATPase gamma chain family. In terms of assembly, F-type ATPases have 2 components, CF(1) - the catalytic core - and CF(0) - the membrane proton channel. CF(1) has five subunits: alpha(3), beta(3), gamma(1), delta(1), epsilon(1). CF(0) has three main subunits: a, b and c.

The protein resides in the cell membrane. Produces ATP from ADP in the presence of a proton gradient across the membrane. The gamma chain is believed to be important in regulating ATPase activity and the flow of protons through the CF(0) complex. The sequence is that of ATP synthase gamma chain from Clostridium botulinum (strain Okra / Type B1).